A 327-amino-acid chain; its full sequence is Microtubule-associated protein RP/EB family member 2 (327 aa).

Residues 1-21 form a disordered region; it reads MPGPTQTLSPNGENNNDIIQD. Serine 9 carries the post-translational modification Phosphoserine. The 103-residue stretch at 57-159 folds into the Calponin-homology (CH) domain; that stretch reads TMSRHDIIAW…FIQWFKKFYD (103 aa). Tyrosine 167 carries the post-translational modification Phosphotyrosine. Disordered regions lie at residues 171–240 and 299–327; these read EARQ…DKDL and ASEE…QEEY. Residues 187–327 are DCTN1-binding; the sequence is QIFNLPKKSH…EQQPPQQEEY (141 aa). The span at 200–234 shows a compositional bias: low complexity; it reads SPTAGAAKSSPAAKPGSTPSRPSSAKRASSSGSAS. A Phosphoserine modification is found at serine 219. The region spanning 236-306 is the EB1 C-terminal domain; sequence SDKDLETQVI…LYASEEHEGH (71 aa). The interval 259-302 is APC-binding; sequence EGVEKERDFYFGKLREIELLCQEHGQENDDLVQRLMDVLYASEE. Over residues 300 to 317 the composition is skewed to basic and acidic residues; sequence SEEHEGHTEEPEAEEQAH. The span at 318–327 shows a compositional bias: low complexity; that stretch reads EQQPPQQEEY.

This sequence belongs to the MAPRE family. As to quaternary structure, interacts with DCTN1. Interacts with APC (via C-terminal). Interacts with monomeric and polymerized tubulin. Interacts with SLAIN1. Interacts (via the N-terminal region) with BAG1.

It localises to the cytoplasm. It is found in the cytoskeleton. Its function is as follows. May be involved in microtubule polymerization, and spindle function by stabilizing microtubules and anchoring them at centrosomes. May play a role in cell migration. This is Microtubule-associated protein RP/EB family member 2 (MAPRE2) from Pongo abelii (Sumatran orangutan).